We begin with the raw amino-acid sequence, 216 residues long: GTP cyclohydrolase-2 (216 aa).

51 to 55 (RIHSE) lines the GTP pocket. Cysteine 56, cysteine 67, and cysteine 69 together coordinate Zn(2+). GTP contacts are provided by residues glutamine 72, 94-96 (EGR), and threonine 116. Catalysis depends on aspartate 128, which acts as the Proton acceptor. Residue arginine 130 is the Nucleophile of the active site. GTP contacts are provided by threonine 151 and lysine 156.

This sequence belongs to the GTP cyclohydrolase II family. Requires Zn(2+) as cofactor.

The enzyme catalyses GTP + 4 H2O = 2,5-diamino-6-hydroxy-4-(5-phosphoribosylamino)-pyrimidine + formate + 2 phosphate + 3 H(+). It participates in cofactor biosynthesis; riboflavin biosynthesis; 5-amino-6-(D-ribitylamino)uracil from GTP: step 1/4. Functionally, catalyzes the conversion of GTP to 2,5-diamino-6-ribosylamino-4(3H)-pyrimidinone 5'-phosphate (DARP), formate and pyrophosphate. The protein is GTP cyclohydrolase-2 of Haemophilus influenzae (strain PittEE).